Here is a 161-residue protein sequence, read N- to C-terminus: Putative pre-16S rRNA nuclease (161 aa).

This sequence belongs to the YqgF nuclease family.

The protein resides in the cytoplasm. Could be a nuclease involved in processing of the 5'-end of pre-16S rRNA. The polypeptide is Putative pre-16S rRNA nuclease (Methylocella silvestris (strain DSM 15510 / CIP 108128 / LMG 27833 / NCIMB 13906 / BL2)).